The sequence spans 170 residues: UPF0220 protein C8D2.02c (170 aa).

The next 4 helical transmembrane spans lie at 23–43 (LGVY…VDAA), 54–74 (LHIT…IVIV), 101–121 (ILFI…TVFI), and 136–156 (MGSA…ALWI).

The protein belongs to the UPF0220 family.

It is found in the membrane. The sequence is that of UPF0220 protein C8D2.02c from Schizosaccharomyces pombe (strain 972 / ATCC 24843) (Fission yeast).